A 912-amino-acid polypeptide reads, in one-letter code: WD repeat-containing protein 44 (912 aa).

Disordered regions lie at residues 206 to 352, 399 to 426, and 460 to 481; these read DIIE…ELTD, SNDA…LKQK, and RDEV…GMPY. A compositionally biased stretch (pro residues) spans 236–258; it reads NRPPQPINAPPPRPPPPARPAPP. The span at 264–278 shows a compositional bias: basic and acidic residues; it reads GDTDFDRSSGFEYQK. Residues 288–311 show a composition bias toward polar residues; it reads SPNTLTENMNRDSQPSLDLASATS. Residues 410–422 are compositionally biased toward basic and acidic residues; the sequence is KPQSHQSETDGGK. A compositionally biased stretch (acidic residues) spans 469 to 478; that stretch reads DDPSSSDDEG. The WD 1 repeat unit spans residues 511-550; that stretch reads EHVGAVWTMKFSHCGRLLASAGQDNVVRIWVLKNAFDYFN. Residues 559-594 are disordered; that stretch reads EGRVSPSPSQESLNSSKSDTDGGVFSGTDDVDPDDK. Positions 563-575 are enriched in low complexity; sequence SPSPSQESLNSSK. 7 WD repeats span residues 608-646, 648-688, 693-732, 743-782, 787-826, 841-880, and 882-912; these read GHTA…CLCC, QHID…VALW, GQTK…YHTQ, RVGR…LSMK, VNSS…SKFT, AHNA…ENIP, and GALK…KNIS. Residues 861-882 are disordered; it reads AETSSEKQEGDQAEPVENIPSG.

Its subcellular location is the cytoplasm. The protein localises to the cytosol. It localises to the perinuclear region. It is found in the endosome membrane. The protein resides in the golgi apparatus. Its subcellular location is the trans-Golgi network. In terms of biological role, downstream effector for rab11. May be involved in vesicle recycling. May also be involved in the inhibition of the intracellular ciliogenesis pathway. This Xenopus laevis (African clawed frog) protein is WD repeat-containing protein 44 (wdr44).